Reading from the N-terminus, the 130-residue chain is Galectin-2 (130 aa).

Residues 4–130 (KFEVKDLNMK…GLQISSFKLE (127 aa)) enclose the Galectin domain. 65 to 71 (WGQEQRE) provides a ligand contact to a beta-D-galactoside.

As to quaternary structure, homodimer.

This protein binds beta-galactoside. Its physiological function is not yet known. The protein is Galectin-2 (Lgals2) of Mus musculus (Mouse).